The chain runs to 418 residues: STE20-related kinase adapter protein beta (418 aa).

The region spanning 58 to 369 (YELQVEIGRG…ASSLLSHVFF (312 aa)) is the Protein kinase domain. ATP contacts are provided by residues 64-72 (IGRGFDNLT) and Lys89.

The protein belongs to the protein kinase superfamily. STE Ser/Thr protein kinase family. STE20 subfamily. In terms of assembly, component of a trimeric complex composed of STK11/LKB1, STRAD (STRADA or STRADB) and CAB39/MO25 (CAB39/MO25alpha or CAB39L/MO25beta): the complex tethers STK11/LKB1 in the cytoplasm and stimulates its catalytic activity. Interacts with BIRC4/XIAP. These two proteins are likely to coexist in a complex with TAK1, TRAF6, TAB1 and TAB2.

The protein resides in the nucleus. It localises to the cytoplasm. Functionally, pseudokinase which, in complex with CAB39/MO25 (CAB39/MO25alpha or CAB39L/MO25beta), binds to and activates STK11/LKB1. Adopts a closed conformation typical of active protein kinases and binds STK11/LKB1 as a pseudosubstrate, promoting conformational change of STK11/LKB1 in an active conformation. The polypeptide is STE20-related kinase adapter protein beta (Stradb) (Mus musculus (Mouse)).